A 166-amino-acid polypeptide reads, in one-letter code: Phosphopantetheine adenylyltransferase (166 aa).

Ser11 is a binding site for substrate. ATP is bound by residues 11–12 (SF) and His19. 3 residues coordinate substrate: Lys43, Val80, and Arg94. ATP is bound by residues 95-97 (GLR), Glu105, and 130-136 (VRTITAT).

The protein belongs to the bacterial CoaD family. Homohexamer. Mg(2+) is required as a cofactor.

Its subcellular location is the cytoplasm. It catalyses the reaction (R)-4'-phosphopantetheine + ATP + H(+) = 3'-dephospho-CoA + diphosphate. The protein operates within cofactor biosynthesis; coenzyme A biosynthesis; CoA from (R)-pantothenate: step 4/5. Its function is as follows. Reversibly transfers an adenylyl group from ATP to 4'-phosphopantetheine, yielding dephospho-CoA (dPCoA) and pyrophosphate. This chain is Phosphopantetheine adenylyltransferase, found in Mesorhizobium japonicum (strain LMG 29417 / CECT 9101 / MAFF 303099) (Mesorhizobium loti (strain MAFF 303099)).